The primary structure comprises 321 residues: MHPSTFVTTIACLAGLAHGYANPGSCSGACNIHDPALIRRQSDGKYFRFSTGNKISYASSSSIKGPWTVLGSVLPRGSSINLPGKTDLWAPDISLVNGAYHLYYSVSAFGSQDSAIGLATSATMDPNSWTDHGSTGIRSSSSKPYNAIDANLFHDGGNYYMTFGSFWHDIYQAPMNSAATAVSSGPYNIAYNPSGTHAVEGAFMYKFGKYYYLFFSSGICCGYDTSRPAAGKEYKIRVCRSTSATGHFVDKHGVSCTNGGGTVVLESHGHVYGPGGQGVFTDPALGPVLYYHYVDTRIGYADGQKRFGWNKIDFSSGWPVV.

Residues 1–19 (MHPSTFVTTIACLAGLAHG) form the signal peptide. Residue Asp34 is the Proton acceptor of the active site. Catalysis depends on Glu200, which acts as the Proton donor.

This sequence belongs to the glycosyl hydrolase 43 family.

The protein localises to the secreted. It catalyses the reaction Endohydrolysis of (1-&gt;5)-alpha-arabinofuranosidic linkages in (1-&gt;5)-arabinans.. Its pathway is glycan metabolism; L-arabinan degradation. Endo-1,5-alpha-L-arabinanase involved in degradation of pectin. Its preferred substrate is linear 1,5-alpha-L-arabinan. In Aspergillus clavatus (strain ATCC 1007 / CBS 513.65 / DSM 816 / NCTC 3887 / NRRL 1 / QM 1276 / 107), this protein is Probable arabinan endo-1,5-alpha-L-arabinosidase A (abnA).